The following is a 109-amino-acid chain: Fluoride-specific ion channel FluC (109 aa).

Transmembrane regions (helical) follow at residues 21–41 (FFLNNNLLVGVIGSFVYGFVI), 52–72 (ILLTGFCSCFTSFSGFVLFLY), and 83–103 (LFFYLNIIIVLNLIIMYAGFL).

Belongs to the fluoride channel Fluc/FEX (TC 1.A.43) family.

It localises to the cell inner membrane. The catalysed reaction is fluoride(in) = fluoride(out). In terms of biological role, fluoride-specific ion channel. Important for reducing fluoride concentration in the cell, thus reducing its toxicity. In Prochlorococcus marinus (strain MIT 9515), this protein is Fluoride-specific ion channel FluC.